We begin with the raw amino-acid sequence, 208 residues long: uncharacterized protein (208 aa).

This is an uncharacterized protein from Ictalurid herpesvirus 1 (strain Auburn) (IcHV-1).